Here is a 280-residue protein sequence, read N- to C-terminus: Nitrogenase iron-iron protein alpha chain (280 aa).

[8Fe-7S] cluster is bound by residues cysteine 5, cysteine 31, and cysteine 94. Residue cysteine 213 coordinates [8Fe-9S-C-homocitryl] cluster.

Belongs to the NifD/NifK/NifE/NifN family. In terms of assembly, hexamer of two alpha, two beta, and two delta chains. The cofactor is [8Fe-7S] cluster. [8Fe-9S-C-homocitryl] cluster serves as cofactor.

It catalyses the reaction N2 + 8 reduced [2Fe-2S]-[ferredoxin] + 16 ATP + 16 H2O = H2 + 8 oxidized [2Fe-2S]-[ferredoxin] + 2 NH4(+) + 16 ADP + 16 phosphate + 6 H(+). Its function is as follows. This iron-iron protein is part of the nitrogenase complex that catalyzes the key enzymatic reactions in nitrogen fixation. Other nitrogenase complexes utilize a molybdenum-iron protein or a vanadium-iron protein. The sequence is that of Nitrogenase iron-iron protein alpha chain (anfD) from Heliomicrobium gestii (Heliobacterium gestii).